Reading from the N-terminus, the 365-residue chain is DNA replication and repair protein RecF (365 aa).

Position 30 to 37 (30 to 37 (GDNGEGKT)) interacts with ATP.

It belongs to the RecF family.

It localises to the cytoplasm. The RecF protein is involved in DNA metabolism; it is required for DNA replication and normal SOS inducibility. RecF binds preferentially to single-stranded, linear DNA. It also seems to bind ATP. This chain is DNA replication and repair protein RecF, found in Leptospira borgpetersenii serovar Hardjo-bovis (strain JB197).